Consider the following 97-residue polypeptide: HssA/B-like protein 27 (97 aa).

It belongs to the hssA/B family.

The polypeptide is HssA/B-like protein 27 (hssl27) (Dictyostelium discoideum (Social amoeba)).